The sequence spans 445 residues: GTPase Der (445 aa).

EngA-type G domains follow at residues 3-167 (PVIA…YADQ) and 180-353 (IKIA…AAAM). Residues 9–16 (GRPNVGKS), 56–60 (DTGGF), 119–122 (NKAE), 186–193 (GRPNVGKS), 233–237 (DTAGL), and 298–301 (NKWD) contribute to the GTP site. Positions 354–438 (AKLPTPKLTR…PLRIEFRSST (85 aa)) constitute a KH-like domain.

It belongs to the TRAFAC class TrmE-Era-EngA-EngB-Septin-like GTPase superfamily. EngA (Der) GTPase family. As to quaternary structure, associates with the 50S ribosomal subunit.

Its function is as follows. GTPase that plays an essential role in the late steps of ribosome biogenesis. The polypeptide is GTPase Der (Burkholderia multivorans (strain ATCC 17616 / 249)).